The primary structure comprises 96 residues: ATP-dependent Clp protease adapter protein ClpS (96 aa).

Belongs to the ClpS family. In terms of assembly, binds to the N-terminal domain of the chaperone ClpA.

In terms of biological role, involved in the modulation of the specificity of the ClpAP-mediated ATP-dependent protein degradation. This is ATP-dependent Clp protease adapter protein ClpS from Campylobacter jejuni subsp. doylei (strain ATCC BAA-1458 / RM4099 / 269.97).